The primary structure comprises 343 residues: Heat-inducible transcription repressor HrcA (343 aa).

It belongs to the HrcA family.

In terms of biological role, negative regulator of class I heat shock genes (grpE-dnaK-dnaJ and groELS operons). Prevents heat-shock induction of these operons. The sequence is that of Heat-inducible transcription repressor HrcA from Leptospira biflexa serovar Patoc (strain Patoc 1 / Ames).